We begin with the raw amino-acid sequence, 366 residues long: MQRELVSFPLSPTVRVKLVAAGFQTAEDVLGVKPSELSKEVGISKEEALETLQIVRRESLTDKPRCAGASVAGKKYTALELLEQEHTQGFIITFCSALDNILGGGIPLMKTTEVCGVPGVGKTQLCMQLAVDVQIPECFGGVAGEAVFIDTEGSFMVDRVVTLANACIQHLHLIAGTHKDEEHQKALEGFTLENILSHIYYFRCHDYTELLAQVYLLPDFLSNHSKVQLVIIDGIALPFRHDLDDLSLRTRLLNGLAQQMISLANNHRLAVILTNQMTTKIDKNQALLVPALGESWGHAATIRLIFHWEQKQRFATLYKSPSQKESTIPFQITPQGFRDAAVTASSSQTEGSSNLRKRSREPEEGC.

Residues 1–117 (MQRELVSFPL…LMKTTEVCGV (117 aa)) are required for Holliday junction resolution activity. Position 11 is a phosphoserine (Ser-11). The interval 70 to 127 (SVAGKKYTALELLEQEHTQGFIITFCSALDNILGGGIPLMKTTEVCGVPGVGKTQLCM) is interaction with RAD51B, RAD51D and XRCC3. 116 to 123 (GVPGVGKT) is a binding site for ATP. A disordered region spans residues 338-366 (RDAAVTASSSQTEGSSNLRKRSREPEEGC). The segment covering 343 to 354 (TASSSQTEGSSN) has biased composition (polar residues). The Nuclear localization signal signature appears at 356-360 (RKRSR).

The protein belongs to the RecA family. RAD51 subfamily. Part of the RAD51 paralog protein complexes BCDX2 and CX3; the complexes have a ring-like structure arranged into a flat disc around a central channel. The BCDX2 complex consits of RAD51B, RAD51C, RAD51D and XRCC2; the CX3 complex consists of RAD51C and XRCC3. The BCDX2 subcomplex RAD51B:RAD51C interacts with RAD51. Interacts with SWSAP1; involved in homologous recombination repair. Interacts directly with PALB2 which may serve as a scaffold for a HR complex containing PALB2, BRCA2, RAD51C, RAD51 and XRCC3. Interacts with HELQ.

It localises to the nucleus. Its subcellular location is the cytoplasm. The protein resides in the perinuclear region. It is found in the mitochondrion. Functionally, essential for the homologous recombination (HR) pathway of DNA repair. Involved in the homologous recombination repair (HRR) pathway of double-stranded DNA breaks arising during DNA replication or induced by DNA-damaging agents. Part of the RAD51 paralog protein complexes BCDX2 and CX3 which act at different stages of the BRCA1-BRCA2-dependent HR pathway. Upon DNA damage, BCDX2 seems to act downstream of BRCA2 recruitment and upstream of RAD51 recruitment; CX3 seems to act downstream of RAD51 recruitment; both complexes bind predominantly to the intersection of the four duplex arms of the Holliday junction (HJ) and to junction of replication forks. The BCDX2 complex was originally reported to bind single-stranded DNA, single-stranded gaps in duplex DNA and specifically to nicks in duplex DNA. The BCDX2 subcomplex RAD51B:RAD51C exhibits single-stranded DNA-dependent ATPase activity suggesting an involvement in early stages of the HR pathway. Involved in RAD51 foci formation in response to DNA damage suggesting an involvement in early stages of HR probably in the invasion step. Has an early function in DNA repair in facilitating phosphorylation of the checkpoint kinase CHEK2 and thereby transduction of the damage signal, leading to cell cycle arrest and HR activation. Participates in branch migration and HJ resolution and thus is important for processing HR intermediates late in the DNA repair process; the function may be linked to the CX3 complex. Part of a PALB2-scaffolded HR complex containing BRCA2 and which is thought to play a role in DNA repair by HR. Protects RAD51 from ubiquitin-mediated degradation that is enhanced following DNA damage. Plays a role in regulating mitochondrial DNA copy number under conditions of oxidative stress in the presence of RAD51 and XRCC3. Contributes to DNA cross-link resistance, sister chromatid cohesion and genomic stability. Involved in maintaining centrosome number in mitosis. The polypeptide is DNA repair protein RAD51 homolog 3 (RAD51C) (Cricetulus griseus (Chinese hamster)).